The primary structure comprises 350 residues: S-adenosylmethionine:tRNA ribosyltransferase-isomerase (350 aa).

It belongs to the QueA family. As to quaternary structure, monomer.

It localises to the cytoplasm. It catalyses the reaction 7-aminomethyl-7-carbaguanosine(34) in tRNA + S-adenosyl-L-methionine = epoxyqueuosine(34) in tRNA + adenine + L-methionine + 2 H(+). It functions in the pathway tRNA modification; tRNA-queuosine biosynthesis. Functionally, transfers and isomerizes the ribose moiety from AdoMet to the 7-aminomethyl group of 7-deazaguanine (preQ1-tRNA) to give epoxyqueuosine (oQ-tRNA). The protein is S-adenosylmethionine:tRNA ribosyltransferase-isomerase of Bacillus mycoides (strain KBAB4) (Bacillus weihenstephanensis).